We begin with the raw amino-acid sequence, 208 residues long: OVARIAN TUMOR DOMAIN-containing deubiquitinating enzyme 2 (208 aa).

The OTU domain occupies 5-127 (IVRRVIPSDN…GLHYDALALS (123 aa)). Asp-13 is a catalytic residue. Cys-16 acts as the Nucleophile in catalysis. Active-site residues include His-120 and His-201.

It belongs to the peptidase C85 family.

The enzyme catalyses Thiol-dependent hydrolysis of ester, thioester, amide, peptide and isopeptide bonds formed by the C-terminal Gly of ubiquitin (a 76-residue protein attached to proteins as an intracellular targeting signal).. Its function is as follows. Hydrolase that can remove conjugated ubiquitin from proteins in vitro and may therefore play an important regulatory role at the level of protein turnover by preventing degradation. Cysteine protease with a preference for 'Lys-63' and 'Lys-48' -linked ubiquitin (UB) tetramers as substrates. The polypeptide is OVARIAN TUMOR DOMAIN-containing deubiquitinating enzyme 2 (Arabidopsis thaliana (Mouse-ear cress)).